The sequence spans 307 residues: Ribonuclease H2 subunit B (307 aa).

N-acetylalanine is present on Ala-2. N6-acetyllysine is present on Lys-291. Residue Ser-292 is modified to Phosphoserine.

It belongs to the RNase H2 subunit B family. The RNase H2 complex is a heterotrimer composed of the catalytic subunit RNASEH2A and the non-catalytic subunits RNASEH2B and RNASEH2C.

It localises to the nucleus. Its function is as follows. Non catalytic subunit of RNase H2, an endonuclease that specifically degrades the RNA of RNA:DNA hybrids. Participates in DNA replication, possibly by mediating the removal of lagging-strand Okazaki fragment RNA primers during DNA replication. Mediates the excision of single ribonucleotides from DNA:RNA duplexes. The protein is Ribonuclease H2 subunit B (Rnaseh2b) of Rattus norvegicus (Rat).